Reading from the N-terminus, the 285-residue chain is HTH-type transcriptional activator AmpR (285 aa).

The region spanning 5-62 (LPLNALRAFEASARHLSFTRAALELCVTQAAVSQQVRILEDRLNRVLFKRLPRGLEMT) is the HTH lysR-type domain. The H-T-H motif DNA-binding region spans 22–41 (FTRAALELCVTQAAVSQQVR).

It belongs to the LysR transcriptional regulatory family.

Its subcellular location is the cytoplasm. Its function is as follows. This protein is a positive regulator of gene expression of beta-lactamase (AmpC). In Citrobacter koseri (Citrobacter diversus), this protein is HTH-type transcriptional activator AmpR (ampR).